The primary structure comprises 114 residues: Small ribosomal subunit protein bS6 (114 aa).

Belongs to the bacterial ribosomal protein bS6 family.

Functionally, binds together with bS18 to 16S ribosomal RNA. This Thermosynechococcus vestitus (strain NIES-2133 / IAM M-273 / BP-1) protein is Small ribosomal subunit protein bS6.